The sequence spans 436 residues: Deoxyuridine 5'-triphosphate nucleotidohydrolase (436 aa).

Residues 328-330 and 431-432 each bind substrate; these read RSS and FG.

It belongs to the dUTPase family. Requires Mg(2+) as cofactor.

It carries out the reaction dUTP + H2O = dUMP + diphosphate + H(+). Functionally, involved in nucleotide metabolism: produces dUMP, the immediate precursor of thymidine nucleotides and decreases the intracellular concentration of dUTP to avoid uracil incorporation into viral DNA. The sequence is that of Deoxyuridine 5'-triphosphate nucleotidohydrolase from Gallid herpesvirus 2 (strain Chicken/Md5/ATCC VR-987) (GaHV-2).